Consider the following 192-residue polypeptide: dTTP/UTP pyrophosphatase (192 aa).

The active-site Proton acceptor is the Asp70.

Belongs to the Maf family. YhdE subfamily. It depends on a divalent metal cation as a cofactor.

It localises to the cytoplasm. It carries out the reaction dTTP + H2O = dTMP + diphosphate + H(+). The catalysed reaction is UTP + H2O = UMP + diphosphate + H(+). In terms of biological role, nucleoside triphosphate pyrophosphatase that hydrolyzes dTTP and UTP. May have a dual role in cell division arrest and in preventing the incorporation of modified nucleotides into cellular nucleic acids. The sequence is that of dTTP/UTP pyrophosphatase from Clostridium perfringens (strain ATCC 13124 / DSM 756 / JCM 1290 / NCIMB 6125 / NCTC 8237 / Type A).